Reading from the N-terminus, the 312-residue chain is MTSLSVNDRKDFVDGQMKYWRQIAESDGFDIDDVPVPRGTRAGLWSVDCKHPRFRLRACLPKIYAMVGLHRYNLLRGTNFEHLELLKYNESMNCVCSYYITSVAVDLSSQLQKTFQIRVDEKSFGDLDLTVSVARPNDEEKVTTEKRFIHHFHCEAAADDFYKGALPDWPSVGDLNNQKRFYMVKKCELQSNDWIRLYLELAVGVRYQQTSESDLSKLQVLKVAIETKEEDVQPPNRRLKSKSLHVYITFKGLAKAPIGDEIGEHVERKAIVRRVIDERSGHLTLLGGFSNAKNDLNQSSDDEQPFGKRRRI.

This sequence belongs to the UPF0725 (EMB2204) family.

The polypeptide is UPF0725 protein At3g19520 (Arabidopsis thaliana (Mouse-ear cress)).